The chain runs to 217 residues: GRB2-related adapter protein (217 aa).

The SH3 1 domain maps to 1–58 (MESVALYSFQATESDELAFNKGDTLKILNMEDDQNWYKAELRGAEGFVPKNYIRVKPH). Residues 60-152 (WYSGRISRQL…RRQIFLCDEQ (93 aa)) enclose the SH2 domain. The region spanning 158–217 (SRACFAQAQFDFSAQDPSQLSLRRGDIVEVVEREDPHWWRGRAGGRLGFFPRSYVQPVHL) is the SH3 2 domain.

This sequence belongs to the GRB2/sem-5/DRK family. As to quaternary structure, associates through its SH2 domain with ligand-activated receptors for stem cell factor (KIT) and erythropoietin (EPOR). Also forms a stable complex with the Bcr-Abl oncoprotein. GRAP is associated with the Ras guanine nucleotide exchange factor SOS1, primarily through its N-terminal SH3 domain. Interacts with phosphorylated LAT upon TCR activation. Interacts with SHB. As to expression, expressed in inner ear, in neruonal fibers innervating cochlear and utricular auditory hair cells (at protein level).

Its subcellular location is the membrane. The protein localises to the synapse. Its function is as follows. Couples signals from receptor and cytoplasmic tyrosine kinases to the Ras signaling pathway. Plays a role in the inner ear and in hearing. The chain is GRB2-related adapter protein from Mus musculus (Mouse).